The following is a 500-amino-acid chain: Probable cytochrome P450 514A2 (500 aa).

Residues 4–24 (IYTIILTIIILVLIISIKDLF) traverse the membrane as a helical segment. Cys446 is a heme binding site.

The protein belongs to the cytochrome P450 family. Heme serves as cofactor.

Its subcellular location is the membrane. The chain is Probable cytochrome P450 514A2 (cyp514A2) from Dictyostelium discoideum (Social amoeba).